Here is a 171-residue protein sequence, read N- to C-terminus: Voltage-dependent P/Q-type calcium channel subunit alpha-1A (171 aa).

A helical membrane pass occupies residues 1-11 (FVTVLGSITDI). Residues 1-171 (FVTVLGSITD…LMLNLFVAVI (171 aa)) form an IV repeat. Residues 12–18 (LVTEFGN) are Extracellular-facing. Residues 19-37 (NFINLSFLRLFRAARLIKL) form a helical membrane-spanning segment. At 38–56 (LRQGYTIRILLWTFVQSFK) the chain is on the cytoplasmic side. The helical transmembrane segment at 57–76 (ALPYVCLLIAMLFFIYAIIG) threads the bilayer. Topologically, residues 77 to 143 (MQVFGNIGIE…ENSGIKEDEC (67 aa)) are extracellular. A helical membrane pass occupies residues 144–168 (GNEFAYFYFVSFIFLCSFLMLNLFV). Over 169–171 (AVI) the chain is Cytoplasmic.

Belongs to the calcium channel alpha-1 subunit (TC 1.A.1.11) family. CACNA1A subfamily. Voltage-dependent calcium channels are multisubunit complexes, consisting of alpha-1, alpha-2, beta and delta subunits in a 1:1:1:1 ratio. The channel activity is directed by the pore-forming and voltage-sensitive alpha-1 subunit. In many cases, this subunit is sufficient to generate voltage-sensitive calcium channel activity. The auxiliary subunits beta and alpha-2/delta linked by a disulfide bridge regulate the channel activity.

Its subcellular location is the cell membrane. The enzyme catalyses Ca(2+)(in) = Ca(2+)(out). In terms of biological role, the isoform alpha-1A gives rise to P and/or Q-type calcium currents. P/Q-type calcium channels belong to the 'high-voltage activated' (HVA) group. This chain is Voltage-dependent P/Q-type calcium channel subunit alpha-1A (CACNA1A), found in Gallus gallus (Chicken).